The primary structure comprises 762 residues: Hyperosmolality-gated Ca2+ permeable channel 2.2 (762 aa).

The next 10 membrane-spanning stretches (helical) occupy residues 3-23, 90-110, 144-164, 354-374, 402-422, 445-465, 500-520, 557-577, 594-614, and 615-635; these read VSAL…LVSL, MVIC…AFVL, LWVH…LLYF, IATL…VTFV, VITG…VPPL, KILY…GSVI, GWAG…NLIA, VIAP…YLIY, QYWP…QVIA, and LGFF…PLIL.

It belongs to the CSC1 (TC 1.A.17) family.

The protein localises to the membrane. In terms of biological role, acts as an osmosensitive calcium-permeable cation channel. The protein is Hyperosmolality-gated Ca2+ permeable channel 2.2 of Arabidopsis thaliana (Mouse-ear cress).